We begin with the raw amino-acid sequence, 532 residues long: Pentatricopeptide repeat-containing protein At5g66500, mitochondrial (532 aa).

The transit peptide at 1–33 (MFACLRIGRFIRLGNVTVKSTNLVLRCVFIRNF) directs the protein to the mitochondrion. PPR repeat units follow at residues 48–82 (DLSSLNSQLSSHLRSGNPNDTLALFLQIHRASPDL), 83–117 (SSHTFTPVLGACSLLSYPETGRQVHALMIKQGAET), 118–148 (GTISKTALIDMYSKYGHLVDSVRVFESVEEK), 149–183 (DLVSWNALLSGFLRNGKGKEALGVFAAMYRERVEI), 184–218 (SEFTLSSVVKTCASLKILQQGKQVHAMVVVTGRDL), 223–248 (TAMISFYSSVGLINEAMKVYNSLNVH), 250–280 (DEVMLNSLISGCIRNRNYKEAFLLMSRQRPN), 281–314 (VRVLSSSLAGCSDNSDLWIGKQIHCVALRNGFVS), 315–345 (DSKLCNGLMDMYGKCGQIVQARTIFRAIPSK), 346–380 (SVVSWTSMIDAYAVNGDGVKALEIFREMCEEGSGV), 383–413 (NSVTFLVVISACAHAGLVKEGKECFGMMKEK), and 419–453 (GTEHYVCFIDILSKAGETEEIWRLVERMMENDNQS). Positions 458 to 532 (IWVAVLSACS…VKTAGHSLFI (75 aa)) are type E motif; degenerate.

Belongs to the PPR family. PCMP-E subfamily.

Its subcellular location is the mitochondrion. This chain is Pentatricopeptide repeat-containing protein At5g66500, mitochondrial (PCMP-E38), found in Arabidopsis thaliana (Mouse-ear cress).